The sequence spans 1338 residues: Protein dispatched homolog 3 (1338 aa).

The Cytoplasmic portion of the chain corresponds to 1–67 (MDTEDDPLLQ…VGWIFTNPYC (67 aa)). A helical membrane pass occupies residues 68–88 (AGFILFLGCAIPAVLAVVMFL). The Lumenal segment spans residues 89-406 (HYPALDIDIS…YEVRRTFNND (318 aa)). Positions 164–196 (TRAKRSAPQGRTSSPEPRAHPHPGNETSRVTRG) are disordered. The region spanning 401-559 (RTFNNDMLLA…LFTMPAALGI (159 aa)) is the SSD domain. Residues 407 to 427 (MLLAFISSSCIAVLVYILTSC) form a helical membrane-spanning segment. Residue S428 is a topological domain, cytoplasmic. Residues 429–449 (VFLSFFGIASIGLSCLVALFL) form a helical membrane-spanning segment. Topologically, residues 450 to 452 (YHV) are lumenal. Residues 453–473 (VFGIQYLGILNGVAAFVIVGI) form a helical membrane-spanning segment. Residues 474-517 (GVDDVFVFINTYRQATHLKDLRLRMIHTIQTAGKATFFTSLTTA) are Cytoplasmic-facing. Residues 518–538 (AAYAANIFSQIPAVHDFGLFM) traverse the membrane as a helical segment. A topological domain (lumenal) is located at residue S539. A helical transmembrane segment spans residues 540 to 560 (LIVSCCWVAVLFTMPAALGIW). Residues 561 to 672 (TLYVSPLESS…WVLWSAVKSR (112 aa)) lie on the Cytoplasmic side of the membrane. The helical transmembrane segment at 673–693 (WVIVGLFLLVLLLSIFFASRL) threads the bilayer. The Lumenal portion of the chain corresponds to 694–1128 (RPASRAPVLF…IFMEIIGVQS (435 aa)). Positions 747–768 (SLEKKKRGSASPWGSKGSISDT) are disordered. A helical transmembrane segment spans residues 1129 to 1149 (ALYGLILSLVICVAAVAVFTT). Residue H1150 is a topological domain, cytoplasmic. The chain crosses the membrane as a helical span at residues 1151 to 1171 (ILLLLPVLLSILGVVCLVVTI). Over 1172–1237 (MYWSGWEMGA…TIEAIRHVGV (66 aa)) the chain is Lumenal. The helical transmembrane segment at 1238 to 1258 (AIVSSAVTTVIATVPLFFCII) threads the bilayer. Residues 1259–1266 (APFAKFGK) are Cytoplasmic-facing. A helical transmembrane segment spans residues 1267-1287 (IVALNTGVSILYTLTVSTALL). At 1288–1302 (SIMGPGTFTRSRTSC) the chain is on the lumenal side. A helical transmembrane segment spans residues 1303–1323 (LKAVAGVLLAGLLGLCICLAL). Over 1324–1338 (LKGGFKIPLPNGTAL) the chain is Cytoplasmic.

Belongs to the patched family. As to expression, expressed in retina, hippocampus and cerebellum. Expressed in the ganglion and bipolar cells of the inner and outer nuclear layers of the retina and in Purkinje cells (at protein level). Expressed strongly in brain and retina, weakly in testis and bone marrow.

Its subcellular location is the endoplasmic reticulum membrane. It localises to the nucleus membrane. It is found in the cytoplasmic vesicle membrane. Plays a role in neuronal proliferation and differentiation. Plays a role in the accumulation of cellular cholesterol. Involved in intracellular lipid droplet formation. May contribute to cholesterol homeostasis in neuronal cells. The chain is Protein dispatched homolog 3 from Gallus gallus (Chicken).